The following is a 101-amino-acid chain: U-scoloptoxin(10)-Sm2a (101 aa).

The first 23 residues, 1 to 23 (MNKSMIILCAVLFLTYIIEENEA), serve as a signal peptide directing secretion.

Belongs to the scoloptoxin-10 family. In terms of processing, contains 3 disulfide bonds. As to expression, expressed by the venom gland.

It localises to the secreted. This is U-scoloptoxin(10)-Sm2a from Scolopendra morsitans (Tanzanian blue ringleg centipede).